The following is a 385-amino-acid chain: Circadian-associated transcriptional repressor (385 aa).

The segment covering M1–S26 has biased composition (low complexity). Disordered regions lie at residues M1 to T108, G203 to D233, and G365 to L385. Residues D33 to R45 show a composition bias toward basic and acidic residues. Polar residues predominate over residues V70–H79.

In terms of assembly, interacts with PER2, CRY2, BHLHE41, HDAC1 and NR3C1. Interacts with BMAL1.

It localises to the nucleus. The protein localises to the PML body. Transcriptional repressor which forms a negative regulatory component of the circadian clock and acts independently of the circadian transcriptional repressors: CRY1, CRY2 and BHLHE41. In a histone deacetylase-dependent manner represses the transcriptional activator activity of the CLOCK-BMAL1 heterodimer. Abrogates the interaction of BMAL1 with the transcriptional coactivator CREBBP and can repress the histone acetyl-transferase activity of the CLOCK-BMAL1 heterodimer, reducing histone acetylation of its target genes. Rhythmically binds the E-box elements (5'-CACGTG-3') on circadian gene promoters and its occupancy shows circadian oscillation antiphasic to BMAL1. Interacts with the glucocorticoid receptor (NR3C1) and contributes to the repressive function in the glucocorticoid response. The polypeptide is Circadian-associated transcriptional repressor (CIART) (Homo sapiens (Human)).